A 295-amino-acid chain; its full sequence is Pyridoxal 5'-phosphate synthase subunit PdxS (295 aa).

Aspartate 25 serves as a coordination point for D-ribose 5-phosphate. Catalysis depends on lysine 82, which acts as the Schiff-base intermediate with D-ribose 5-phosphate. Position 154 (glycine 154) interacts with D-ribose 5-phosphate. Arginine 166 provides a ligand contact to D-glyceraldehyde 3-phosphate. D-ribose 5-phosphate is bound by residues glycine 215 and 236–237; that span reads GS.

The protein belongs to the PdxS/SNZ family. In the presence of PdxT, forms a dodecamer of heterodimers.

It catalyses the reaction aldehydo-D-ribose 5-phosphate + D-glyceraldehyde 3-phosphate + L-glutamine = pyridoxal 5'-phosphate + L-glutamate + phosphate + 3 H2O + H(+). Its pathway is cofactor biosynthesis; pyridoxal 5'-phosphate biosynthesis. Catalyzes the formation of pyridoxal 5'-phosphate from ribose 5-phosphate (RBP), glyceraldehyde 3-phosphate (G3P) and ammonia. The ammonia is provided by the PdxT subunit. Can also use ribulose 5-phosphate and dihydroxyacetone phosphate as substrates, resulting from enzyme-catalyzed isomerization of RBP and G3P, respectively. This is Pyridoxal 5'-phosphate synthase subunit PdxS from Actinobacillus pleuropneumoniae serotype 5b (strain L20).